A 100-amino-acid polypeptide reads, in one-letter code: Ubiquitin-related modifier 1 homolog (100 aa).

G100 carries the post-translational modification 1-thioglycine. G100 is covalently cross-linked (Glycyl lysine isopeptide (Gly-Lys) (interchain with K-? in acceptor proteins)).

Belongs to the URM1 family. As to quaternary structure, interacts with cer. In terms of processing, C-terminal thiocarboxylation occurs in 2 steps, it is first acyl-adenylated (-COAMP) via the hesA/moeB/thiF part of the MOCS3 homolog, then thiocarboxylated (-COSH) via the rhodanese domain of the MOCS3 homolog.

The protein localises to the cytoplasm. It functions in the pathway tRNA modification; 5-methoxycarbonylmethyl-2-thiouridine-tRNA biosynthesis. In terms of biological role, acts as a sulfur carrier required for 2-thiolation of mcm(5)S(2)U at tRNA wobble positions of cytosolic tRNA(Lys), tRNA(Glu) and tRNA(Gln). Serves as sulfur donor in tRNA 2-thiolation reaction by being thiocarboxylated (-COSH) at its C-terminus by MOCS3. The sulfur is then transferred to tRNA to form 2-thiolation of mcm(5)S(2)U. Also acts as a ubiquitin-like protein (UBL) that is covalently conjugated via an isopeptide bond to lysine residues of target proteins such as Prx2/Jafrac1, Ciao1, Eip71CD and GILT1. The thiocarboxylated form serves as substrate for conjugation and oxidative stress specifically induces the formation of UBL-protein conjugates. In Drosophila willistoni (Fruit fly), this protein is Ubiquitin-related modifier 1 homolog.